A 279-amino-acid chain; its full sequence is Vitamin B12-binding protein (279 aa).

A signal peptide spans 1-20 (MTFRFLCWLTGLLLCTAAYA). In terms of domain architecture, Fe/B12 periplasmic-binding spans 24–276 (RVISLAPHAT…QLAELKLAPS (253 aa)). A disulfide bond links Cys-189 and Cys-265.

It belongs to the BtuF family. As to quaternary structure, the complex is composed of two ATP-binding proteins (BtuD), two transmembrane proteins (BtuC) and a solute-binding protein (BtuF).

Its subcellular location is the periplasm. Part of the ABC transporter complex BtuCDF involved in vitamin B12 import. Binds vitamin B12 and delivers it to the periplasmic surface of BtuC. The chain is Vitamin B12-binding protein from Pectobacterium atrosepticum (strain SCRI 1043 / ATCC BAA-672) (Erwinia carotovora subsp. atroseptica).